The following is a 471-amino-acid chain: UDP-N-acetylmuramate--L-alanine ligase (471 aa).

Residue 114-120 participates in ATP binding; the sequence is GTHGKTT.

It belongs to the MurCDEF family.

The protein localises to the cytoplasm. The catalysed reaction is UDP-N-acetyl-alpha-D-muramate + L-alanine + ATP = UDP-N-acetyl-alpha-D-muramoyl-L-alanine + ADP + phosphate + H(+). It functions in the pathway cell wall biogenesis; peptidoglycan biosynthesis. Its function is as follows. Cell wall formation. This chain is UDP-N-acetylmuramate--L-alanine ligase, found in Methylobacterium sp. (strain 4-46).